The chain runs to 545 residues: T-complex protein 1 subunit gamma (545 aa).

The residue at position 1 (methionine 1) is an N-acetylmethionine. A disordered region spans residues 1 to 24 (MMGHRPVLVLSQNTKRESGRKVQS). Serine 11 bears the Phosphoserine mark. A Glycyl lysine isopeptide (Lys-Gly) (interchain with G-Cter in SUMO2) cross-link involves residue lysine 15. Glycine 42 lines the ADP pocket. Glycine 42 is an ATP binding site. Aspartate 93 provides a ligand contact to Mg(2+). Positions 94, 95, 96, 97, 162, and 163 each coordinate ADP. 3 residues coordinate ATP: glycine 94, threonine 95, and threonine 96. A Phosphoserine modification is found at serine 170. Residue lysine 222 is modified to N6-acetyllysine. 2 positions are modified to phosphoserine: serine 243 and serine 244. At tyrosine 247 the chain carries Phosphotyrosine. Residues lysine 248 and lysine 249 each participate in a glycyl lysine isopeptide (Lys-Gly) (interchain with G-Cter in SUMO2) cross-link. The residue at position 252 (serine 252) is a Phosphoserine. Cysteine 366 and cysteine 372 form a disulfide bridge. Lysine 381 is covalently cross-linked (Glycyl lysine isopeptide (Lys-Gly) (interchain with G-Cter in SUMO2)). Residue glycine 411 coordinates ADP. Glycine 411 is a binding site for ATP. A phosphothreonine mark is found at threonine 430 and threonine 459. Residues glycine 482, glutamate 483, glutamate 497, and lysine 502 each contribute to the ADP site. Glycine 482 lines the ATP pocket. Position 497 (glutamate 497) interacts with ATP. The interval 526–545 (HKKKGDDQNRQTGAPDAGQE) is disordered.

This sequence belongs to the TCP-1 chaperonin family. In terms of assembly, component of the chaperonin-containing T-complex (TRiC), a hexadecamer composed of two identical back-to-back stacked rings enclosing a protein folding chamber. Each ring is made up of eight different subunits: TCP1/CCT1, CCT2, CCT3, CCT4, CCT5, CCT6A/CCT6, CCT7, CCT8. Interacts with PACRG. Interacts with DNAAF4. Interacts with DLEC1.

The protein localises to the cytoplasm. The catalysed reaction is ATP + H2O = ADP + phosphate + H(+). Its function is as follows. Component of the chaperonin-containing T-complex (TRiC), a molecular chaperone complex that assists the folding of actin, tubulin and other proteins upon ATP hydrolysis. The TRiC complex mediates the folding of WRAP53/TCAB1, thereby regulating telomere maintenance. As part of the TRiC complex may play a role in the assembly of BBSome, a complex involved in ciliogenesis regulating transports vesicles to the cilia. The sequence is that of T-complex protein 1 subunit gamma (Cct3) from Rattus norvegicus (Rat).